A 531-amino-acid chain; its full sequence is Peptide chain release factor 3 (531 aa).

Residues 11–280 (GRRRTFAIIS…AFIRFASRPG (270 aa)) enclose the tr-type G domain. GTP-binding positions include 20 to 27 (SHPDAGKT), 88 to 92 (DTPGH), and 142 to 145 (NKLD).

It belongs to the TRAFAC class translation factor GTPase superfamily. Classic translation factor GTPase family. PrfC subfamily.

The protein localises to the cytoplasm. In terms of biological role, increases the formation of ribosomal termination complexes and stimulates activities of RF-1 and RF-2. It binds guanine nucleotides and has strong preference for UGA stop codons. It may interact directly with the ribosome. The stimulation of RF-1 and RF-2 is significantly reduced by GTP and GDP, but not by GMP. This Gloeobacter violaceus (strain ATCC 29082 / PCC 7421) protein is Peptide chain release factor 3.